The sequence spans 434 residues: Glutamate-1-semialdehyde 2,1-aminomutase (434 aa).

At K265 the chain carries N6-(pyridoxal phosphate)lysine.

This sequence belongs to the class-III pyridoxal-phosphate-dependent aminotransferase family. HemL subfamily. In terms of assembly, homodimer. Requires pyridoxal 5'-phosphate as cofactor.

Its subcellular location is the cytoplasm. It catalyses the reaction (S)-4-amino-5-oxopentanoate = 5-aminolevulinate. Its pathway is porphyrin-containing compound metabolism; protoporphyrin-IX biosynthesis; 5-aminolevulinate from L-glutamyl-tRNA(Glu): step 2/2. This Ruminiclostridium cellulolyticum (strain ATCC 35319 / DSM 5812 / JCM 6584 / H10) (Clostridium cellulolyticum) protein is Glutamate-1-semialdehyde 2,1-aminomutase.